We begin with the raw amino-acid sequence, 87 residues long: Exendin-4 (87 aa).

The N-terminal stretch at 1–23 is a signal peptide; it reads MKIILWLCVFGLFLATLFPISWQ. Positions 24–45 are excised as a propeptide; the sequence is MPVESGLSSEDSASSESFASKI. Ser86 carries the serine amide modification.

This sequence belongs to the glucagon family. Expressed by the venom gland.

It localises to the secreted. Its function is as follows. Venom protein that mimics the incretin hormone glucagon-like peptide 1 (GLP-1). It stimulates insulin synthesis and secretion, protects against beta-cell apoptosis in response to different insults, and promotes beta-cell proliferation It also promotes satiety, reduces food intake, reduces fat deposition, reduces body weight and inhibits gastric emptying. Interacts with GLP-1 receptor (GLP1R). Induces hypotension that is mediated by relaxation of cardiac smooth muscle. This chain is Exendin-4, found in Heloderma suspectum cinctum (Banded Gila monster).